Here is a 439-residue protein sequence, read N- to C-terminus: Ribosomal protein uS12 methylthiotransferase RimO (439 aa).

The region spanning 7 to 122 (QTIAVIALGC…LPDLVFGKNF (116 aa)) is the MTTase N-terminal domain. Residues Cys16, Cys52, Cys85, Cys155, Cys159, and Cys162 each coordinate [4Fe-4S] cluster. The Radical SAM core domain occupies 141–369 (SSTIPSAYLK…NAQYNIFQAK (229 aa)).

Belongs to the methylthiotransferase family. RimO subfamily. [4Fe-4S] cluster is required as a cofactor.

It localises to the cytoplasm. The catalysed reaction is L-aspartate(89)-[ribosomal protein uS12]-hydrogen + (sulfur carrier)-SH + AH2 + 2 S-adenosyl-L-methionine = 3-methylsulfanyl-L-aspartate(89)-[ribosomal protein uS12]-hydrogen + (sulfur carrier)-H + 5'-deoxyadenosine + L-methionine + A + S-adenosyl-L-homocysteine + 2 H(+). Its function is as follows. Catalyzes the methylthiolation of an aspartic acid residue of ribosomal protein uS12. This chain is Ribosomal protein uS12 methylthiotransferase RimO, found in Endomicrobium trichonymphae.